Consider the following 1152-residue polypeptide: Alpha-mannosidase 2x (1152 aa).

Topologically, residues 1–5 (MKLKK) are cytoplasmic. A helical; Signal-anchor for type II membrane protein transmembrane segment spans residues 6–26 (QVTVCGAAIFCVAVFSLYLML). At 27-796 (DRVQHDPARH…VDEEQEQQME (770 aa)) the chain is on the lumenal side. A coiled-coil region spans residues 43–74 (PRSQISVLQNRIEQLEQLLEENHDIISRIKDS). Positions 175 and 177 each coordinate Zn(2+). Asn225 is a glycosylation site (N-linked (GlcNAc...) asparagine). Asp289 contacts Zn(2+). The active-site Nucleophile is Asp289. An N-linked (GlcNAc...) asparagine glycan is attached at Asn305. Residue His569 coordinates Zn(2+).

This sequence belongs to the glycosyl hydrolase 38 family. As to quaternary structure, homodimer; disulfide-linked. Interacts with MGAT4D. Zn(2+) is required as a cofactor.

The protein localises to the golgi apparatus membrane. It carries out the reaction N(4)-{beta-D-GlcNAc-(1-&gt;2)-alpha-D-Man-(1-&gt;3)-[alpha-D-Man-(1-&gt;3)-[alpha-D-Man-(1-&gt;6)]-alpha-D-Man-(1-&gt;6)]-beta-D-Man-(1-&gt;4)-beta-D-GlcNAc-(1-&gt;4)-beta-D-GlcNAc}-L-asparaginyl-[protein] + 2 H2O = 2 alpha-D-mannopyranose + an N(4)-{beta-D-GlcNAc-(1-&gt;2)-alpha-D-Man-(1-&gt;3)-[alpha-D-Man-(1-&gt;6)]-beta-D-Man-(1-&gt;4)-beta-D-GlcNAc-(1-&gt;4)-beta-D-GlcNAc}-L-asparaginyl-[protein]. Its pathway is protein modification; protein glycosylation. Functionally, catalyzes the first committed step in the biosynthesis of complex N-glycans. It controls conversion of high mannose to complex N-glycans; the final hydrolytic step in the N-glycan maturation pathway. This chain is Alpha-mannosidase 2x (Man2a2), found in Mus musculus (Mouse).